Reading from the N-terminus, the 70-residue chain is U2-agatoxin-Ao1d (70 aa).

The N-terminal stretch at 1 to 20 (MRAIIYLLLISAMVFSMTKA) is a signal peptide. A propeptide spanning residues 21 to 34 (VPEEEGLQLSEDER) is cleaved from the precursor. Disulfide bonds link Cys37/Cys53, Cys44/Cys58, and Cys52/Cys68. At Leu69 the chain carries Leucine amide.

Belongs to the neurotoxin 01 (U2-agtx) family. In terms of tissue distribution, expressed by the venom gland.

The protein localises to the secreted. Functionally, insect active toxin causing rapid but reversible paralysis in crickets. No activity shown in mammals. Does not show effect on mammalian voltage-gated calcium channels. This is U2-agatoxin-Ao1d from Agelena orientalis (Funnel-web spider).